Consider the following 85-residue polypeptide: Probable oxaloacetate decarboxylase gamma chain (85 aa).

A helical transmembrane segment spans residues 11–33 (AATLMVTGMAVVFIFLTILVYLV).

This sequence belongs to the OadG family. Heterotrimer of an alpha, a beta and a gamma subunit. Na(+) serves as cofactor.

The protein localises to the cell membrane. The enzyme catalyses oxaloacetate + 2 Na(+)(in) + H(+) = pyruvate + 2 Na(+)(out) + CO2. Functionally, catalyzes the decarboxylation of oxaloacetate coupled to Na(+) translocation. The chain is Probable oxaloacetate decarboxylase gamma chain from Vibrio parahaemolyticus serotype O3:K6 (strain RIMD 2210633).